A 398-amino-acid polypeptide reads, in one-letter code: Phospholipase C (398 aa).

The signal sequence occupies residues 1 to 28 (MKRKICKALICAALATSLWAGASTKVYA). Residues tryptophan 29, histidine 39, aspartate 84, histidine 96, histidine 154, aspartate 158, histidine 164, histidine 176, and glutamate 180 each coordinate Zn(2+). The region spanning 29–278 (WDGKIDGTGT…HDVSEGNDPS (250 aa)) is the Zn-dependent PLC domain. The tract at residues 275–283 (NDPSVGKNV) is linker. The region spanning 284–398 (KELVAYISTS…ISGNSTYNIK (115 aa)) is the PLAT domain. Ca(2+) contacts are provided by aspartate 297, glycine 299, threonine 300, aspartate 301, aspartate 321, asparagine 322, glycine 324, asparagine 325, aspartate 326, aspartate 364, and alanine 365.

The protein belongs to the bacterial zinc-metallophospholipase C family. Ca(2+) is required as a cofactor. The cofactor is Zn(2+).

Its subcellular location is the secreted. The catalysed reaction is a 1,2-diacyl-sn-glycero-3-phosphocholine + H2O = phosphocholine + a 1,2-diacyl-sn-glycerol + H(+). Functionally, bacterial hemolysins are exotoxins that attack blood cell membranes and cause cell rupture. Constitutes an essential virulence factor in gas gangrene. Binds to eukaryotic membranes where it hydrolyzes both phosphatidylcholine and sphingomyelin. The diacylglycerol produced can activate both the arachidonic acid pathway, leading to modulation of the inflammatory response cascade and thrombosis, and protein kinase C, leading to activation of eukaryotic phospholipases and further membrane damage. Acts on human and mouse erythrocytes, but not on rabbit or horse erythrocytes. In Clostridium perfringens (strain ATCC 13124 / DSM 756 / JCM 1290 / NCIMB 6125 / NCTC 8237 / Type A), this protein is Phospholipase C (plc).